We begin with the raw amino-acid sequence, 594 residues long: MLKRRQPKYCSFMDSIDNSTTIIRKNLNRFIRELTDDGKLDFESIPYQNLQKEVANQDEEGCENVIEVLLDTTSRSGCPDRKLILQLFNSFFLQFPIFRENLLNDPSEFLELMFETNPIRNPLPGSKKHGNELKVEAITVIKSWEKEKCVKNDARMKCLVVTLKKTKFVDYENGAKKIEAERKRKKILEERKMKMIENSVNVYSSKYHEIKNDAETLSMELTTTMQMLVPSFTTADPEVPSTSTSTPSAISDSKSFEIFIPDLTPEISVSSENDAIVEAFLGAKLSLIHRVQTLRKLVKRLQLLKQPGEKLAQEIIDYRDGIKNLVLKADELRIINPRPPKNKRKKSDDDFIDVDISIDDILMVQYAEKLEVDVKSKDESEKITESPEKHKIEMKNEKPVKIKTVPFGLDLKYWGEERKDVEVPKNNADCHRFWRSADEGTVAGKAQQSIYTQRQYTFIGKAPDNRKVCLAKMKSGKLCPRKDYYTCPLHGKIVDRDDEGRPINEEDRLEENYRKEQNHLKEADKIRQMIEKEYESKTKRRKKHDVDTTASEDVRNRLQKKLLDPKTIQRVSADLDASRKNRLEKNFGQQFSHF.

Positions 24 to 170 (RKNLNRFIRE…VTLKKTKFVD (147 aa)) are VHS-like. Residues 170–198 (DYENGAKKIEAERKRKKILEERKMKMIEN) adopt a coiled-coil conformation. The UVSSA-type zinc-finger motif lies at 466-493 (RKVCLAKMKSGKLCPRKDYYTCPLHGKI). Zn(2+)-binding residues include Cys-469, Cys-479, Cys-487, and His-490. Residues 503–540 (INEEDRLEENYRKEQNHLKEADKIRQMIEKEYESKTKR) adopt a coiled-coil conformation. A disordered region spans residues 533-558 (EYESKTKRRKKHDVDTTASEDVRNRL). Positions 544 to 558 (HDVDTTASEDVRNRL) are enriched in basic and acidic residues.

It belongs to the UVSSA family.

It is found in the chromosome. In terms of biological role, factor involved in transcription-coupled nucleotide excision repair (TC-NER) in response to UV damage. TC-NER allows RNA polymerase II-blocking lesions to be rapidly removed from the transcribed strand of active genes. The protein is UV-stimulated scaffold protein A homolog of Caenorhabditis elegans.